The chain runs to 368 residues: tRNA/tmRNA (uracil-C(5))-methyltransferase (368 aa).

5 residues coordinate S-adenosyl-L-methionine: Gln190, Tyr218, Asn223, Glu239, and Asp301. Residue Cys326 is the Nucleophile of the active site. Catalysis depends on Glu360, which acts as the Proton acceptor.

Belongs to the class I-like SAM-binding methyltransferase superfamily. RNA M5U methyltransferase family. TrmA subfamily.

The catalysed reaction is uridine(54) in tRNA + S-adenosyl-L-methionine = 5-methyluridine(54) in tRNA + S-adenosyl-L-homocysteine + H(+). It carries out the reaction uridine(341) in tmRNA + S-adenosyl-L-methionine = 5-methyluridine(341) in tmRNA + S-adenosyl-L-homocysteine + H(+). Its function is as follows. Dual-specificity methyltransferase that catalyzes the formation of 5-methyluridine at position 54 (m5U54) in all tRNAs, and that of position 341 (m5U341) in tmRNA (transfer-mRNA). The sequence is that of tRNA/tmRNA (uracil-C(5))-methyltransferase from Aliivibrio fischeri (strain MJ11) (Vibrio fischeri).